The sequence spans 171 residues: Adenine phosphoribosyltransferase (171 aa).

It belongs to the purine/pyrimidine phosphoribosyltransferase family. Homodimer.

Its subcellular location is the cytoplasm. It catalyses the reaction AMP + diphosphate = 5-phospho-alpha-D-ribose 1-diphosphate + adenine. Its pathway is purine metabolism; AMP biosynthesis via salvage pathway; AMP from adenine: step 1/1. In terms of biological role, catalyzes a salvage reaction resulting in the formation of AMP, that is energically less costly than de novo synthesis. This chain is Adenine phosphoribosyltransferase, found in Christiangramia forsetii (strain DSM 17595 / CGMCC 1.15422 / KT0803) (Gramella forsetii).